Here is a 246-residue protein sequence, read N- to C-terminus: MSQVTMRDMLKAGCHFGHQTRYWNPKMGRYIFGARNKIHIINLEKTLPMFNEALSFVEKLAAGKNKILFVGTKRSAGRLVREEAARCSMPYVDHRWLGGMLTNYKTIRASIKRLRELETQSQDGTFAKLTKKEALMRTRDLEKLERSLGGIKDMGGLPDAMFVIDVDHERIAISEANKLGIPVIGVVDTNSSPEGVDYIIPGNDDAIRAVQLYLGSVADAVLRGRQNAGTGDEFIEEVAASEAAEG.

The protein belongs to the universal ribosomal protein uS2 family.

This Azotobacter vinelandii (strain DJ / ATCC BAA-1303) protein is Small ribosomal subunit protein uS2.